Here is a 722-residue protein sequence, read N- to C-terminus: Fatty acid oxidation complex subunit alpha (722 aa).

An enoyl-CoA hydratase/isomerase region spans residues 1-189 (MIYQGKSLSA…AQGAIDAVVE (189 aa)). Aspartate 296 is a substrate binding site. Residues 311–722 (TKAVNKAAVL…SYFTTDVKLA (412 aa)) are 3-hydroxyacyl-CoA dehydrogenase. Residues methionine 325, aspartate 344, 401 to 403 (VVE), lysine 408, and serine 430 each bind NAD(+). The For 3-hydroxyacyl-CoA dehydrogenase activity role is filled by histidine 451. Asparagine 454 contacts NAD(+). Substrate contacts are provided by asparagine 501 and tyrosine 661.

It in the N-terminal section; belongs to the enoyl-CoA hydratase/isomerase family. The protein in the C-terminal section; belongs to the 3-hydroxyacyl-CoA dehydrogenase family. Heterotetramer of two alpha chains (FadB) and two beta chains (FadA).

It carries out the reaction a (3S)-3-hydroxyacyl-CoA + NAD(+) = a 3-oxoacyl-CoA + NADH + H(+). The enzyme catalyses a (3S)-3-hydroxyacyl-CoA = a (2E)-enoyl-CoA + H2O. It catalyses the reaction a 4-saturated-(3S)-3-hydroxyacyl-CoA = a (3E)-enoyl-CoA + H2O. The catalysed reaction is (3S)-3-hydroxybutanoyl-CoA = (3R)-3-hydroxybutanoyl-CoA. It carries out the reaction a (3Z)-enoyl-CoA = a 4-saturated (2E)-enoyl-CoA. The enzyme catalyses a (3E)-enoyl-CoA = a 4-saturated (2E)-enoyl-CoA. The protein operates within lipid metabolism; fatty acid beta-oxidation. In terms of biological role, involved in the aerobic and anaerobic degradation of long-chain fatty acids via beta-oxidation cycle. Catalyzes the formation of 3-oxoacyl-CoA from enoyl-CoA via L-3-hydroxyacyl-CoA. It can also use D-3-hydroxyacyl-CoA and cis-3-enoyl-CoA as substrate. The sequence is that of Fatty acid oxidation complex subunit alpha from Colwellia psychrerythraea (strain 34H / ATCC BAA-681) (Vibrio psychroerythus).